The sequence spans 163 residues: Phosphopantetheine adenylyltransferase (163 aa).

A substrate-binding site is contributed by T10. Residues 10 to 11 and H18 contribute to the ATP site; that span reads TF. Positions 42, 74, and 88 each coordinate substrate. Residues 89-91, E99, and 124-130 each bind ATP; these read GLR and NSFISST.

Belongs to the bacterial CoaD family. As to quaternary structure, homohexamer. Mg(2+) serves as cofactor.

Its subcellular location is the cytoplasm. It carries out the reaction (R)-4'-phosphopantetheine + ATP + H(+) = 3'-dephospho-CoA + diphosphate. It participates in cofactor biosynthesis; coenzyme A biosynthesis; CoA from (R)-pantothenate: step 4/5. In terms of biological role, reversibly transfers an adenylyl group from ATP to 4'-phosphopantetheine, yielding dephospho-CoA (dPCoA) and pyrophosphate. The sequence is that of Phosphopantetheine adenylyltransferase from Shewanella sp. (strain W3-18-1).